Here is a 444-residue protein sequence, read N- to C-terminus: DNA primase DnaG (444 aa).

A Toprim domain is found at 186-260 (DSIIVVEGRN…EVDFVARAPP (75 aa)). The Mg(2+) site is built by Glu192, Asp234, and Asp236.

This sequence belongs to the archaeal DnaG primase family. As to quaternary structure, forms a ternary complex with MCM helicase and DNA. Component of the archaeal exosome complex. Mg(2+) serves as cofactor.

The enzyme catalyses ssDNA + n NTP = ssDNA/pppN(pN)n-1 hybrid + (n-1) diphosphate.. Its function is as follows. RNA polymerase that catalyzes the synthesis of short RNA molecules used as primers for DNA polymerase during DNA replication. Also part of the exosome, which is a complex involved in RNA degradation. Acts as a poly(A)-binding protein that enhances the interaction between heteromeric, adenine-rich transcripts and the exosome. This chain is DNA primase DnaG, found in Thermoplasma volcanium (strain ATCC 51530 / DSM 4299 / JCM 9571 / NBRC 15438 / GSS1).